Here is a 98-residue protein sequence, read N- to C-terminus: NADH-ubiquinone oxidoreductase chain 4L (98 aa).

The next 3 helical transmembrane spans lie at 1–21 (MMSISLNLTMAFLLALAGVLI), 28–48 (STLLCLEGMMLSLFILMALLI), and 59–79 (APLILLVFSACEAGVGLALLV).

The protein belongs to the complex I subunit 4L family. In terms of assembly, core subunit of respiratory chain NADH dehydrogenase (Complex I) which is composed of 45 different subunits.

The protein localises to the mitochondrion inner membrane. It carries out the reaction a ubiquinone + NADH + 5 H(+)(in) = a ubiquinol + NAD(+) + 4 H(+)(out). Functionally, core subunit of the mitochondrial membrane respiratory chain NADH dehydrogenase (Complex I) which catalyzes electron transfer from NADH through the respiratory chain, using ubiquinone as an electron acceptor. Part of the enzyme membrane arm which is embedded in the lipid bilayer and involved in proton translocation. In Osphranter robustus (Wallaroo), this protein is NADH-ubiquinone oxidoreductase chain 4L (MT-ND4L).